The chain runs to 552 residues: Putative transport protein Spro_0050 (552 aa).

6 consecutive transmembrane segments (helical) span residues 4–24, 26–46, 65–85, 96–116, 117–137, and 158–178; these read IALT…MGNW, IYGV…VGHF, FGLI…FFSS, FAIL…KLFA, VPLP…PALG, and MGYA…MWLI. RCK C-terminal domains lie at 192-276 and 279-361; these read AFAS…VIGE and DVSL…IVGN. The next 6 helical transmembrane spans lie at 371-391, 393-413, 439-459, 464-484, 493-513, and 530-550; these read MLPV…PLFI, GFPA…ALIL, IVLF…DTLI, LAWI…VGVL, YLTL…LAFA, and VYPL…VLFW.

It belongs to the AAE transporter (TC 2.A.81) family. YidE subfamily.

Its subcellular location is the cell membrane. The sequence is that of Putative transport protein Spro_0050 from Serratia proteamaculans (strain 568).